The following is a 346-amino-acid chain: Uroporphyrinogen decarboxylase (346 aa).

Residues 23–27 (RQAGR), Asp-72, Tyr-155, Ser-209, and His-322 contribute to the substrate site.

It belongs to the uroporphyrinogen decarboxylase family. In terms of assembly, homodimer.

The protein resides in the cytoplasm. The enzyme catalyses uroporphyrinogen III + 4 H(+) = coproporphyrinogen III + 4 CO2. The protein operates within porphyrin-containing compound metabolism; protoporphyrin-IX biosynthesis; coproporphyrinogen-III from 5-aminolevulinate: step 4/4. In terms of biological role, catalyzes the decarboxylation of four acetate groups of uroporphyrinogen-III to yield coproporphyrinogen-III. This Anaeromyxobacter sp. (strain Fw109-5) protein is Uroporphyrinogen decarboxylase.